The following is a 619-amino-acid chain: Trihelix transcription factor GTL2 (619 aa).

Disordered regions lie at residues 11–41 and 62–100; these read HRFI…VSFS and HHHH…HHHH. The span at 16-27 shows a compositional bias: pro residues; it reads SPPPPPPLPPHQ. The region spanning 102–154 is the Myb-like 1 domain; that stretch reads PWCSDEVLALLRFRSTVENWFPEFTWEHTSRKLAEVGFKRSPQECKEKFEEEE. Residues 307-361 adopt a coiled-coil conformation; the sequence is VRNMIAQQEEMHKKLLEDMVKKEEEKIAREEAWKKQEIERVNKEVEIRAQEQAMA. 2 disordered regions span residues 382–414 and 434–458; these read VVQN…SSLL and STKT…DLGK. Over residues 384–396 the composition is skewed to polar residues; the sequence is QNPTSPSQDSSSL. Residues 435 to 444 are compositionally biased toward low complexity; the sequence is TKTLKPKNQN. Positions 448-458 are enriched in basic and acidic residues; it reads PKSDDKSDLGK. Residues 459–526 enclose the Myb-like 2 domain; the sequence is RWPKDEVLAL…RCKEKWENIN (68 aa). The Nuclear localization signal signature appears at 503 to 510; it reads SKKMLEIG. Residues 557–619 form a disordered region; that stretch reads SQPPTGTTAT…VQFSGFDLEF (63 aa). A compositionally biased stretch (low complexity) spans 561–574; sequence TGTTATTATTATSA. The segment covering 575–585 has biased composition (basic and acidic residues); the sequence is RDLDTRPEENR.

It is found in the nucleus. In terms of biological role, probable transcription factor that binds specific DNA sequence. The chain is Trihelix transcription factor GTL2 from Arabidopsis thaliana (Mouse-ear cress).